Reading from the N-terminus, the 329-residue chain is DNA-directed RNA polymerase subunit alpha (329 aa).

The segment at 1–234 is alpha N-terminal domain (alpha-NTD); that stretch reads MQGSVTEFLK…EQLDAFVELR (234 aa). Positions 248–329 are alpha C-terminal domain (alpha-CTD); sequence FDPILLRPVD…WPPASLADDL (82 aa).

The protein belongs to the RNA polymerase alpha chain family. Homodimer. The RNAP catalytic core consists of 2 alpha, 1 beta, 1 beta' and 1 omega subunit. When a sigma factor is associated with the core the holoenzyme is formed, which can initiate transcription.

It carries out the reaction RNA(n) + a ribonucleoside 5'-triphosphate = RNA(n+1) + diphosphate. Its function is as follows. DNA-dependent RNA polymerase catalyzes the transcription of DNA into RNA using the four ribonucleoside triphosphates as substrates. The chain is DNA-directed RNA polymerase subunit alpha from Shewanella amazonensis (strain ATCC BAA-1098 / SB2B).